A 405-amino-acid polypeptide reads, in one-letter code: Peroxisome biogenesis factor 3 (405 aa).

Residues 1–26 (MENFQFEDLSPNKVSKVYQDLKKFGS) lie on the Cytoplasmic side of the membrane. A helical membrane pass occupies residues 27-49 (FLYNHKMGVFLVSFSSGVAYLYH). Residues 50-124 (NITQSHKRKQ…EKLKLTDQLK (75 aa)) lie on the Peroxisomal side of the membrane. The helical transmembrane segment at 125–144 (VSIITKLFSVLYIIPMVTIF) threads the bilayer. Residues 145-405 (NRLQINLIGK…NDLDFNKVQF (261 aa)) lie on the Cytoplasmic side of the membrane.

Belongs to the peroxin-3 family.

The protein resides in the peroxisome membrane. Its function is as follows. Involved in peroxisome biosynthesis. The chain is Peroxisome biogenesis factor 3 (pex3) from Dictyostelium discoideum (Social amoeba).